The primary structure comprises 1288 residues: Contactin-associated protein-like 3 (1288 aa).

The signal sequence occupies residues Met-1–Ala-25. Residues Gly-26–Ala-1245 are Extracellular-facing. The F5/8 type C domain maps to Cys-31–Cys-177. Cysteines 31 and 177 form a disulfide. Laminin G-like domains are found at residues Val-183–Cys-364 and Val-370–Cys-545. Asn-285, Asn-359, Asn-441, and Asn-497 each carry an N-linked (GlcNAc...) asparagine glycan. Cys-332 and Cys-364 are disulfide-bonded. Cystine bridges form between Cys-513/Cys-545, Cys-551/Cys-562, Cys-556/Cys-571, and Cys-573/Cys-583. In terms of domain architecture, EGF-like 1 spans Cys-551–Cys-583. The Fibrinogen C-terminal domain maps to His-584–Trp-792. N-linked (GlcNAc...) asparagine glycans are attached at residues Asn-623 and Asn-706. One can recognise a Laminin G-like 3 domain in the interval Asn-793–Cys-958. 4 cysteine pairs are disulfide-bonded: Cys-931–Cys-958, Cys-962–Cys-975, Cys-969–Cys-984, and Cys-986–Cys-996. Residues Cys-962 to Cys-996 enclose the EGF-like 2 domain. One can recognise a Laminin G-like 4 domain in the interval Gln-1015 to Cys-1203. Residues Asn-1023, Asn-1073, and Asn-1120 are each glycosylated (N-linked (GlcNAc...) asparagine). A disulfide bridge links Cys-1167 with Cys-1203. Positions Glu-1215–Leu-1236 are disordered. The helical transmembrane segment at Val-1246–Ile-1266 threads the bilayer. Residues Arg-1267–Cys-1288 are Cytoplasmic-facing.

Belongs to the neurexin family.

It is found in the cell membrane. The protein resides in the secreted. In Homo sapiens (Human), this protein is Contactin-associated protein-like 3 (CNTNAP3).